A 28-amino-acid polypeptide reads, in one-letter code: N-acetyl-D-galactosamine-binding lectin subunit A (28 aa).

Belongs to the ribosome-inactivating protein family. In terms of assembly, disulfide-linked heterodimer of A and B chains.

The enzyme catalyses Endohydrolysis of the N-glycosidic bond at one specific adenosine on the 28S rRNA.. In terms of biological role, gal / GalNAc-specific lectin. Agglutinates both native and trypsin-treated rabbit erythrocytes but not human erythrocytes irrespective of blood group type. The polypeptide is N-acetyl-D-galactosamine-binding lectin subunit A (Iris hollandica (Dutch iris)).